Reading from the N-terminus, the 449-residue chain is Serine/threonine-protein phosphatase 2A activator 2 (449 aa).

Disordered regions lie at residues 1–72 (MDSS…DPST) and 378–416 (MSEQDPNALGSEENEEEGGEVEVYDDSDGKRHVHQPTGW). The segment covering 54-69 (NPTPVPETPALPPRPD) has biased composition (pro residues). The segment covering 389–403 (EENEEEGGEVEVYDD) has biased composition (acidic residues).

This sequence belongs to the PTPA-type PPIase family.

It localises to the cytoplasm. It carries out the reaction [protein]-peptidylproline (omega=180) = [protein]-peptidylproline (omega=0). In terms of biological role, PPIases accelerate the folding of proteins. It catalyzes the cis-trans isomerization of proline imidic peptide bonds in oligopeptides. Acts as a regulatory subunit for PP2A-like phosphatases modulating their activity or substrate specificity, probably by inducing a conformational change in the catalytic subunit, a direct target of the PPIase. Can reactivate inactive phosphatase PP2A-phosphatase methylesterase complexes (PP2Ai) in presence of ATP and Mg(2+) by dissociating the inactive form from the complex. This Neurospora crassa (strain ATCC 24698 / 74-OR23-1A / CBS 708.71 / DSM 1257 / FGSC 987) protein is Serine/threonine-protein phosphatase 2A activator 2 (rrd-2).